Here is a 791-residue protein sequence, read N- to C-terminus: Putative inactive tyrosine-protein kinase Wsck (791 aa).

Positions 1 to 26 (MECGSHSGHRPIPIWLSSCLVAMCLG) are cleaved as a signal peptide. Topologically, residues 27-401 (LPLGAAVPQE…YATFEKGQSS (375 aa)) are extracellular. The WSC domain maps to 39–125 (AYYYVGCYTA…VGVHSYYSTI (87 aa)). Positions 131 to 246 (GPHHLRISNK…ASIEATTEVG (116 aa)) constitute a Fibronectin type-III domain. N-linked (GlcNAc...) asparagine glycosylation is found at asparagine 139, asparagine 217, and asparagine 329. Residues 402–422 (VVALAVTCVIFGSCLLLSLIA) form a helical membrane-spanning segment. The Cytoplasmic portion of the chain corresponds to 423 to 791 (YFYLRYKTCR…PQLEAVATMG (369 aa)). Positions 493–758 (LNVNDVIGDG…DVAFGVRQLM (266 aa)) constitute a Protein kinase domain. 499-507 (IGDGRFGEI) serves as a coordination point for ATP.

Belongs to the protein kinase superfamily. Tyr protein kinase family.

It is found in the membrane. Its function is as follows. Probably lacks tyrosine-protein kinase activity. The sequence is that of Putative inactive tyrosine-protein kinase Wsck from Drosophila melanogaster (Fruit fly).